The chain runs to 455 residues: Transcription factor mokH (455 aa).

Residues 1 to 22 (MALSPVQDPPSHTDKTMPRRAF) are disordered. Positions 26–58 (CDRCHAQKIKCIGSEGAVARASCQRCQQAGLRC) form a DNA-binding region, zn(2)-C6 fungal-type. Disordered regions lie at residues 68–113 (KLPK…DSSG) and 296–317 (LTPL…RSSV). Over residues 75 to 88 (AESSPASSTAGLHT) the composition is skewed to polar residues. A compositionally biased stretch (low complexity) spans 89 to 113 (SSSDSSPPVPSDGLPLDLPGPDSSG).

Its subcellular location is the nucleus. Transcription factor that regulates the gene cluster that mediates the biosynthesis of monakolin K, also known as lovastatin, and which acts as a potent competitive inhibitor of HMG-CoA reductase. Monakolin K biosynthesis is performed in two stages. The first stage is catalyzed by the nonaketide synthase mokA, which belongs to type I polyketide synthases and catalyzes the iterative nine-step formation of the polyketide. This PKS stage is completed by the action of dehydrogenase mokE, which catalyzes the NADPH-dependent reduction of the unsaturated tetra-, penta- and heptaketide intermediates that arise during the mokA-mediated biosynthesis of the nonaketide chain and leads to dihydromonacolin L. Covalently bound dihydromonacolin L is released from mokA by the mokD esterase. Conversion of dihydromonacolin L into monacolin L and then monacolin J is subsequently performed with the participation of molecular oxygen and P450 monoogygenase mokC. Finally, mokF performs the conversion of monacoline J to monacoline K through the addition of the side-chain diketide moiety (2R)-2-methylbutanoate produced by the diketide synthase mokB. HMG-CoA reductase mokG may act as a down-regulator of monacolin K production. The polypeptide is Transcription factor mokH (Monascus pilosus (Red mold)).